A 478-amino-acid polypeptide reads, in one-letter code: Adenosylhomocysteinase (478 aa).

Substrate-binding residues include Thr-57, Asp-139, and Glu-201. 202 to 204 (TTT) contacts NAD(+). Substrate contacts are provided by Lys-231 and Asp-235. NAD(+) is bound by residues Asn-236, 265–270 (GYGDVG), Glu-288, Asn-323, 344–346 (IGH), and Asn-392.

Belongs to the adenosylhomocysteinase family. It depends on NAD(+) as a cofactor.

The protein resides in the cytoplasm. It carries out the reaction S-adenosyl-L-homocysteine + H2O = L-homocysteine + adenosine. The protein operates within amino-acid biosynthesis; L-homocysteine biosynthesis; L-homocysteine from S-adenosyl-L-homocysteine: step 1/1. Functionally, may play a key role in the regulation of the intracellular concentration of adenosylhomocysteine. The sequence is that of Adenosylhomocysteinase from Corynebacterium glutamicum (strain R).